We begin with the raw amino-acid sequence, 538 residues long: Chaperonin GroEL 1 (538 aa).

Residues 30–33 (TLGP), K51, 87–91 (DGTTT), G415, 479–481 (NAA), and D495 contribute to the ATP site.

This sequence belongs to the chaperonin (HSP60) family. In terms of assembly, forms a cylinder of 14 subunits composed of two heptameric rings stacked back-to-back. Interacts with the co-chaperonin GroES.

It is found in the cytoplasm. The enzyme catalyses ATP + H2O + a folded polypeptide = ADP + phosphate + an unfolded polypeptide.. In terms of biological role, together with its co-chaperonin GroES, plays an essential role in assisting protein folding. The GroEL-GroES system forms a nano-cage that allows encapsulation of the non-native substrate proteins and provides a physical environment optimized to promote and accelerate protein folding. This is Chaperonin GroEL 1 from Chromobacterium violaceum (strain ATCC 12472 / DSM 30191 / JCM 1249 / CCUG 213 / NBRC 12614 / NCIMB 9131 / NCTC 9757 / MK).